The following is a 320-amino-acid chain: 1-aminocyclopropane-1-carboxylate oxidase 3 (320 aa).

The stretch at 111-131 (NEYRLAMKDFGKRLEILAEEL) forms a coiled coil. A Fe2OG dioxygenase domain is found at 155-256 (GPTFATKLSN…RMSIASFYNP (102 aa)). His180, Asp182, and His237 together coordinate Fe cation. Arg247 is a binding site for 2-oxoglutarate.

Belongs to the iron/ascorbate-dependent oxidoreductase family. Fe(2+) is required as a cofactor.

The enzyme catalyses 1-aminocyclopropane-1-carboxylate + L-ascorbate + O2 = ethene + L-dehydroascorbate + hydrogen cyanide + CO2 + 2 H2O. The protein operates within alkene biosynthesis; ethylene biosynthesis via S-adenosyl-L-methionine; ethylene from S-adenosyl-L-methionine: step 2/2. Its function is as follows. Enzyme involved in the ethylene biosynthesis. May promote stem elongation by maximizing the extensibility cells, possibly by activating ethylene biosynthesis, in response to very-long-chain fatty acids (VLCFAs C20:0 to C30:0). This is 1-aminocyclopropane-1-carboxylate oxidase 3 from Arabidopsis thaliana (Mouse-ear cress).